Here is a 127-residue protein sequence, read N- to C-terminus: Small ribosomal subunit protein eS8 (127 aa).

Belongs to the eukaryotic ribosomal protein eS8 family. As to quaternary structure, part of the 30S ribosomal subunit.

This Pyrococcus abyssi (strain GE5 / Orsay) protein is Small ribosomal subunit protein eS8 (rps8e).